We begin with the raw amino-acid sequence, 212 residues long: Eukaryotic translation initiation factor 4E-4 (212 aa).

An intrachain disulfide couples cysteine 143 to cysteine 147.

Belongs to the eukaryotic initiation factor 4E family. As to quaternary structure, eIF4F is a multi-subunit complex, the composition of which varies with external and internal environmental conditions. It is composed of at least eIF4A, eIF4E and eIF4G. eIF4E is also known to interact with other partners. In terms of tissue distribution, enriched in somatic cells.

Its function is as follows. Recognizes and binds the 7-methylguanosine-containing mRNA cap during an early step in the initiation of protein synthesis and facilitates ribosome binding by inducing the unwinding of the mRNAs secondary structures. All 5 eIF4E proteins bind monomethyl cap structures. Only ife-1, ife-2 and ife-5 bind trimethyl cap structures which result from trans-splicing. Translation of trimethyl cap structure mRNAs may be regulated by intracellular redox state; disulfide bonds change the width and depth of the cap-binding cavity determining selectivity to mRNA caps. The chain is Eukaryotic translation initiation factor 4E-4 (ife-4) from Caenorhabditis elegans.